A 584-amino-acid chain; its full sequence is DNA damage-binding protein 2 (584 aa).

Positions 1 to 87 are disordered; the sequence is MGPTTRARFV…PVAAAARSGR (87 aa). The span at 8 to 20 shows a compositional bias: basic residues; that stretch reads RFVHNRRRRRRRG. 2 stretches are compositionally biased toward acidic residues: residues 25–35 and 45–66; these read PDDDDEEEDQQ and DEGE…DGEA. A CCHC-type zinc finger spans residues 122–140; sequence KPCFLCKMPGGHTTLTCPH. 7 WD repeats span residues 192-232, 236-278, 288-327, 333-373, 378-418, 438-481, and 484-523; these read FHQR…EKIT, VHSC…SLLN, STWR…RIGD, KKGS…PNSA, AHGR…LESP, EWDP…LAEV, and PDIT…DATE. Residues 351 to 366 carry the DWD box motif; sequence LLSSGNDHYARIWDTR. Over residues 517-532 the composition is skewed to basic and acidic residues; that stretch reads TESDATEERNREKAKE. A disordered region spans residues 517 to 584; it reads TESDATEERN…TIKGKGKSKV (68 aa). Positions 562 to 584 are enriched in basic residues; the sequence is KKKKKAKKTRFTHTIKGKGKSKV.

The protein belongs to the WD repeat DDB2/WDR76 family. In terms of assembly, component of the UV-DDB complex, which is composed of DDB1 and DDB2. In terms of tissue distribution, expressed in proliferating tissues such as shoot apical meristem (SAM), root tips and young leaves. Not detected in mature leaves.

It localises to the nucleus. Functionally, required for DNA repair. Binds to DDB1 to form the UV-damaged DNA-binding protein complex (the UV-DDB complex). The UV-DDB complex may recognize UV-induced DNA damage and recruit proteins of the nucleotide excision repair pathway (the NER pathway) to initiate DNA repair. May function as the substrate recognition module for a DCX (DDB1-CUL4-X-box) E3 ubiquitin-protein ligase complex. This Oryza sativa subsp. japonica (Rice) protein is DNA damage-binding protein 2.